An 879-amino-acid polypeptide reads, in one-letter code: MPTEANTYDPQRIESIAQHYWDSTHAFEVNEHSNKPKYYCLSMLPYPSGALHMGHVRNYTIGDVISRYKRMTGHNVLQPMGWDAFGLPAENAAIKNKVAPAQWTYKNIERMRTQLKSLGYAINWSREFATCQPDYYVHEQHMFTRLMRKGLAYRRNALVNWDPVDQTVLANEQVIDGRGWRSGAPVEKREIPQWFLRITDYAQELLDGLNTLDDWPEPVKTMQRNWIGRSEGLEIRFEVRDVDNNALEALRVFTTRPDTLFGVTFVSIAPEHPLALHAAKSNPGLAGLLTQMKQGGLSEAELKTQEKRGMDTGLKAIHPITNEQLPVWVANFVLMAYGTGAVMAVPGHDQRDQEFANKYGLPIRQVIALKEPKNQDESTWEPDVWRDWYADKTREFELINSAEFDGLDYQGAFEVLVERFERQGRGQRRVNYRLRDWGVSRQRYWGCPIPVIYCPTCGAVPVPENQLPVILPENVAFSGTGSPIKTDSEWRKTTCPECGGPAERETDTFDTFMESSWYYARYTSPNAREMLDKRANYWLPVDQYIGGIEHAILHLMYFRFYHKLMRDARLVDSDEPAINLLTQGMVIAETFYRKNPDGSKDWINPADVNVECDERGRITGATLISDGQPVLIGATEKMSKSKNNGVDPQIMVTKYGADTVRLFSMFAAPPEQSLEWNEAGVEGMARFLRRLWTQVHHHASHGPATALDITALDTAQKAIRCKTHNTIARVEDDYGRRRSFNTAIAAVMELSNTLARFDDTTTQSHAVRQEALETMVLLLNPITPHTSHALWQTLGHPETLLEDLPFPKVDTTALVRETATLAVQVNGKLRGTIEVATDAPREHIENNALTEPNTARFLEGLTVLKIIIVPGKIVNIVAR.

The 'HIGH' region motif lies at 45-55; sequence PYPSGALHMGH. A 'KMSKS' region motif is present at residues 637 to 641; the sequence is KMSKS. Residue Lys-640 coordinates ATP.

The protein belongs to the class-I aminoacyl-tRNA synthetase family.

The protein resides in the cytoplasm. It carries out the reaction tRNA(Leu) + L-leucine + ATP = L-leucyl-tRNA(Leu) + AMP + diphosphate. The protein is Leucine--tRNA ligase of Xylella fastidiosa (strain M12).